The sequence spans 253 residues: Succinate dehydrogenase iron-sulfur subunit (253 aa).

C64, C69, and C84 together coordinate [2Fe-2S] cluster. The 4Fe-4S ferredoxin-type domain maps to 146–174; it reads RQWAYELSKCMTCGVCLEACPNVNSKSKF. C155, C158, and C161 together coordinate [4Fe-4S] cluster. 3 residues coordinate [3Fe-4S] cluster: C165, C212, and C218. C222 contributes to the [4Fe-4S] cluster binding site.

It belongs to the succinate dehydrogenase/fumarate reductase iron-sulfur protein family. In terms of assembly, in B.subtilis succinate dehydrogenase forms part of an enzyme complex containing three subunits: a flavoprotein, an iron-sulfur protein and cytochrome b-558. [2Fe-2S] cluster serves as cofactor. Requires [3Fe-4S] cluster as cofactor. [4Fe-4S] cluster is required as a cofactor.

The catalysed reaction is a quinone + succinate = fumarate + a quinol. The protein operates within carbohydrate metabolism; tricarboxylic acid cycle; fumarate from succinate (bacterial route): step 1/1. This Bacillus subtilis (strain 168) protein is Succinate dehydrogenase iron-sulfur subunit (sdhB).